The chain runs to 393 residues: Chorismate synthase (393 aa).

The NADP(+) site is built by Arg40 and Arg46. FMN is bound by residues 129–131, 249–250, Gly301, 316–320, and Arg342; these read RSS, QA, and KPIPT.

Belongs to the chorismate synthase family. As to quaternary structure, homotetramer. Requires FMNH2 as cofactor.

It carries out the reaction 5-O-(1-carboxyvinyl)-3-phosphoshikimate = chorismate + phosphate. Its pathway is metabolic intermediate biosynthesis; chorismate biosynthesis; chorismate from D-erythrose 4-phosphate and phosphoenolpyruvate: step 7/7. Its function is as follows. Catalyzes the anti-1,4-elimination of the C-3 phosphate and the C-6 proR hydrogen from 5-enolpyruvylshikimate-3-phosphate (EPSP) to yield chorismate, which is the branch point compound that serves as the starting substrate for the three terminal pathways of aromatic amino acid biosynthesis. This reaction introduces a second double bond into the aromatic ring system. This chain is Chorismate synthase, found in Geotalea daltonii (strain DSM 22248 / JCM 15807 / FRC-32) (Geobacter daltonii).